We begin with the raw amino-acid sequence, 299 residues long: Nucleotide-binding protein glr4163 (299 aa).

18-25 (SPAGAGRT) is a binding site for ATP.

The protein belongs to the RapZ-like family.

Its function is as follows. Displays ATPase and GTPase activities. The protein is Nucleotide-binding protein glr4163 of Gloeobacter violaceus (strain ATCC 29082 / PCC 7421).